The chain runs to 445 residues: Ribulose bisphosphate carboxylase large chain (445 aa).

Substrate contacts are provided by Asn89 and Thr139. The Proton acceptor role is filled by Lys141. Substrate is bound at residue Lys143. 3 residues coordinate Mg(2+): Lys167, Asp169, and Glu170. N6-carboxylysine is present on Lys167. His260 serves as the catalytic Proton acceptor. Positions 261, 293, and 345 each coordinate substrate.

The protein belongs to the RuBisCO large chain family. Type I subfamily. As to quaternary structure, heterohexadecamer of 8 large chains and 8 small chains; disulfide-linked. The disulfide link is formed within the large subunit homodimers. Mg(2+) is required as a cofactor. In terms of processing, the disulfide bond which can form in the large chain dimeric partners within the hexadecamer appears to be associated with oxidative stress and protein turnover.

It localises to the plastid. The protein localises to the chloroplast. The catalysed reaction is 2 (2R)-3-phosphoglycerate + 2 H(+) = D-ribulose 1,5-bisphosphate + CO2 + H2O. It carries out the reaction D-ribulose 1,5-bisphosphate + O2 = 2-phosphoglycolate + (2R)-3-phosphoglycerate + 2 H(+). Its function is as follows. RuBisCO catalyzes two reactions: the carboxylation of D-ribulose 1,5-bisphosphate, the primary event in carbon dioxide fixation, as well as the oxidative fragmentation of the pentose substrate in the photorespiration process. Both reactions occur simultaneously and in competition at the same active site. This Callicarpa dichotoma (Purple beautyberry) protein is Ribulose bisphosphate carboxylase large chain.